The chain runs to 319 residues: Homoserine kinase (319 aa).

An ATP-binding site is contributed by 100 to 110; the sequence is PLSSGMGSSAS.

This sequence belongs to the GHMP kinase family. Homoserine kinase subfamily.

It localises to the cytoplasm. The enzyme catalyses L-homoserine + ATP = O-phospho-L-homoserine + ADP + H(+). It participates in amino-acid biosynthesis; L-threonine biosynthesis; L-threonine from L-aspartate: step 4/5. Its function is as follows. Catalyzes the ATP-dependent phosphorylation of L-homoserine to L-homoserine phosphate. The polypeptide is Homoserine kinase (Chloroherpeton thalassium (strain ATCC 35110 / GB-78)).